The chain runs to 193 residues: Orotate phosphoribosyltransferase (193 aa).

Residues R107, K108, K111, H113, and 133–141 (EDVITSGGS) each bind 5-phospho-alpha-D-ribose 1-diphosphate. Residues T137 and R165 each contribute to the orotate site.

The protein belongs to the purine/pyrimidine phosphoribosyltransferase family. PyrE subfamily. In terms of assembly, homodimer. Mg(2+) is required as a cofactor.

The catalysed reaction is orotidine 5'-phosphate + diphosphate = orotate + 5-phospho-alpha-D-ribose 1-diphosphate. It participates in pyrimidine metabolism; UMP biosynthesis via de novo pathway; UMP from orotate: step 1/2. Catalyzes the transfer of a ribosyl phosphate group from 5-phosphoribose 1-diphosphate to orotate, leading to the formation of orotidine monophosphate (OMP). This is Orotate phosphoribosyltransferase from Rhodopirellula baltica (strain DSM 10527 / NCIMB 13988 / SH1).